Here is a 740-residue protein sequence, read N- to C-terminus: Probable apyrase 7 (740 aa).

The Cytoplasmic portion of the chain corresponds to 1–113; the sequence is MVFGRITELF…PSTRRKLIRA (113 aa). A helical transmembrane segment spans residues 114–134; that stretch reads VMIVMCLFLFAFLVYIVSMYI. Residues 135-581 are Extracellular-facing; the sequence is YTNWSRGASR…LKSYETLSMK (447 aa). The N-linked (GlcNAc...) asparagine glycan is linked to N137. 147–157 is a binding site for ATP; that stretch reads VVFDCGSTGTR. N208 carries N-linked (GlcNAc...) asparagine glycosylation. E284 functions as the Proton acceptor in the catalytic mechanism. An ATP-binding site is contributed by 309–319; sequence GALDLGGSSLQ. N330, N374, N439, and N484 each carry an N-linked (GlcNAc...) asparagine glycan. A helical transmembrane segment spans residues 582–602; the sequence is INPIALISILILSLLLLLCAL. The Cytoplasmic segment spans residues 603–740; it reads SRVSNCLPRF…SLADSHMLKM (138 aa). The tract at residues 706 to 740 is disordered; that stretch reads FWSSPRRSQMRLQSRRSQSREDLSSSLADSHMLKM. The segment covering 708–721 has biased composition (low complexity); the sequence is SSPRRSQMRLQSRR.

The protein belongs to the GDA1/CD39 NTPase family. It depends on Ca(2+) as a cofactor. As to expression, detected in mature pollen grains. Also expressed in more diverse tissues such as roots, leaves, stems, pistils and sepals. More particularly expressed in the vascular bundle.

The protein resides in the membrane. The enzyme catalyses a ribonucleoside 5'-triphosphate + 2 H2O = a ribonucleoside 5'-phosphate + 2 phosphate + 2 H(+). Its function is as follows. Catalyzes the hydrolysis of phosphoanhydride bonds of nucleoside tri- and di-phosphates. Involved in the regulation of pollen and anther development. The polypeptide is Probable apyrase 7 (APY7) (Arabidopsis thaliana (Mouse-ear cress)).